Consider the following 576-residue polypeptide: K(+)/H(+) antiporter NhaP2 (576 aa).

The next 13 membrane-spanning stretches (helical) occupy residues 6–26 (INSFFLIGALLTAVSVLLSPM), 34–54 (ILLIFLAVGILAGEDGPGGIL), 58–78 (YSTAYLVSNLALAIILLDGGM), 87–107 (VALWPALSLATFGVAITTSIT), 109–129 (MMAAWLFDLHWLQGLLVGAIV), 163–183 (PMAVFLTVTLIAILANVDTEM), 185–205 (FSFMFISFIKQFGLGICLGLG), 219–239 (LADGLYSILVLSGGLIIYAAS), 242–262 (LGGSGILSIYLVGLFLGNKPT), 271–291 (VLDGMTWVSQIGMFLVLGLLL), 299–319 (ILIPGFALAFGMILFARPVAV), 335–355 (WFISWVGLRGAVPIILAVFPM), and 359–379 (LPGAQLYFNLAFFVVLVSLLV). Residues 405-486 (SGVEIYPSSE…LEALSNLFSQ (82 aa)) enclose the RCK C-terminal domain.

Belongs to the monovalent cation:proton antiporter 1 (CPA1) transporter (TC 2.A.36) family. NhaP2 subfamily.

Its subcellular location is the cell inner membrane. It carries out the reaction K(+)(in) + H(+)(out) = K(+)(out) + H(+)(in). K(+)/H(+) antiporter that extrudes potassium in exchange for external protons and maintains the internal concentration of potassium under toxic levels. This Shewanella baltica (strain OS155 / ATCC BAA-1091) protein is K(+)/H(+) antiporter NhaP2.